We begin with the raw amino-acid sequence, 1181 residues long: Clustered mitochondria protein homolog (1181 aa).

Residues 165–195 form a disordered region; sequence AKAEALAKNEEVSEDEESEPEDDTPMKQSTQ. The segment covering 176–187 has biased composition (acidic residues); that stretch reads VSEDEESEPEDD. Residues 379-622 enclose the Clu domain; sequence DMARNQELLS…RLAPVDIAFL (244 aa). Residues 1130–1181 form a disordered region; sequence GRLARQAPKPTATHQKEAPKKASKKTKGKGKGKDDKGEKLVAELKKKKAGKR. Over residues 1150-1159 the composition is skewed to basic residues; that stretch reads KASKKTKGKG. Residues 1160 to 1173 are compositionally biased toward basic and acidic residues; it reads KGKDDKGEKLVAEL.

This sequence belongs to the CLU family. In terms of assembly, may associate with the eukaryotic translation initiation factor 3 (eIF-3) complex.

It is found in the cytoplasm. Its function is as follows. mRNA-binding protein involved in proper cytoplasmic distribution of mitochondria. The sequence is that of Clustered mitochondria protein homolog from Yarrowia lipolytica (strain CLIB 122 / E 150) (Yeast).